A 181-amino-acid chain; its full sequence is Ubiquitin-like protein 4B (181 aa).

The Ubiquitin-like domain occupies 1–76 (MWLTVKLLLG…LNVIIRPLEK (76 aa)). Residues 139–181 (PEGKHSGATGSTRESKGDMEPRRNMKCNLAHKDGFKREKSPGK) are disordered. Composition is skewed to basic and acidic residues over residues 151-161 (RESKGDMEPRR) and 168-181 (AHKDGFKREKSPGK).

It localises to the cytoplasm. This Monodelphis domestica (Gray short-tailed opossum) protein is Ubiquitin-like protein 4B (UBL4B).